The primary structure comprises 473 residues: JmjC domain-containing protein 4 (473 aa).

The JmjC domain occupies 140-433 (PTDGLLTDFS…DFDHPYLDRN (294 aa)). The tract at residues 452–473 (TNKKNEKRPAEDDSPSQKKTCQ) is disordered.

The protein resides in the nucleus. Has a role in meiosis. The polypeptide is JmjC domain-containing protein 4 (jmj4) (Schizosaccharomyces pombe (strain 972 / ATCC 24843) (Fission yeast)).